Consider the following 392-residue polypeptide: Speckle-type POZ protein-like (392 aa).

Residues 31 to 161 enclose the MATH domain; it reads KFSYMWTINN…DDKLTLFCEV (131 aa). Residues 200–267 enclose the BTB domain; that stretch reads TDCSFFVRGQ…IYTGRAPNLD (68 aa).

This sequence belongs to the Tdpoz family. Homodimer. Heterodimer with SPOP. Component of cullin-RING-based BCR (BTB-CUL3-RBX1) E3 ubiquitin-protein ligase complexes containing homodimeric SPOPL or the heterodimer formed by SPOP and SPOPL. Interacts with CUL3 and MACROH2A1.

It is found in the nucleus. It participates in protein modification; protein ubiquitination. Its function is as follows. Component of a cullin-RING-based BCR (BTB-CUL3-RBX1) E3 ubiquitin-protein ligase complex that mediates the ubiquitination and subsequent proteasomal degradation of target proteins, but with relatively low efficiency. Cullin-RING-based BCR (BTB-CUL3-RBX1) E3 ubiquitin-protein ligase complexes containing homodimeric SPOPL or the heterodimer formed by SPOP and SPOPL are less efficient than ubiquitin ligase complexes containing only SPOP. May function to down-regulate the activity of cullin-RING-based BCR (BTB-CUL3-RBX1) E3 ubiquitin-protein ligase complexes that contain SPOP. The chain is Speckle-type POZ protein-like (SPOPL) from Homo sapiens (Human).